Consider the following 278-residue polypeptide: Secoisolariciresinol dehydrogenase (278 aa).

Residues 23–28 (GGAGGI), Asp-47, Val-73, and Asn-99 each bind NAD(+). Positions 104 and 164 each coordinate substrate. Tyr-167 functions as the Proton donor/acceptor in the catalytic mechanism. Residues Lys-171 and Val-200 each contribute to the NAD(+) site.

The protein belongs to the short-chain dehydrogenases/reductases (SDR) family. In terms of assembly, homotetramer.

The enzyme catalyses (-)-secoisolariciresinol + 2 NAD(+) = (-)-matairesinol + 2 NADH + 2 H(+). In terms of biological role, oxidoreductase involved in lignan biosynthesis. Catalyzes the stereospecific conversion of (-)-secoisolariciresinol to (-)-matairesinol via a lactol intermediate. This chain is Secoisolariciresinol dehydrogenase, found in Podophyllum peltatum (American mandrake).